Reading from the N-terminus, the 187-residue chain is MLSASDLRKGLKLDIEGSPYIIIDFDFSKPGKGQALYRCKMRNMITGNQLVKTYRSSDKFEKASLEERKMQFLYSQGEEYHFMDNENYDQLFITKDMLGDNIYFLQDNMDVDVLFFDEKPIDITLPIFVNLEVTRADPWVKGDTSGTDTKPITVETGYQLQVPPFVEQGDKIQIDTRTGQYVTRVKQ.

It belongs to the elongation factor P family.

Its subcellular location is the cytoplasm. It participates in protein biosynthesis; polypeptide chain elongation. Involved in peptide bond synthesis. Stimulates efficient translation and peptide-bond synthesis on native or reconstituted 70S ribosomes in vitro. Probably functions indirectly by altering the affinity of the ribosome for aminoacyl-tRNA, thus increasing their reactivity as acceptors for peptidyl transferase. In Desulfotalea psychrophila (strain LSv54 / DSM 12343), this protein is Elongation factor P.